A 579-amino-acid polypeptide reads, in one-letter code: Laccase-24 (579 aa).

Residues 1-23 (MARSWSLLLLPFALALVASVAQA) form the signal peptide. Plastocyanin-like domains lie at 31–148 (NVGN…PRGG) and 159–322 (EEVV…YGGG). Residues asparagine 34 and asparagine 78 are each glycosylated (N-linked (GlcNAc...) asparagine). The Cu cation site is built by histidine 82 and histidine 84. Residues asparagine 110 and asparagine 116 are each glycosylated (N-linked (GlcNAc...) asparagine). Cu cation-binding residues include histidine 127 and histidine 129. N-linked (GlcNAc...) asparagine glycosylation is found at asparagine 204, asparagine 209, asparagine 219, asparagine 241, asparagine 312, asparagine 337, asparagine 348, asparagine 398, asparagine 405, asparagine 444, and asparagine 462. The region spanning 425 to 563 (DFPDTPPIVF…GMVFEVQNGP (139 aa)) is the Plastocyanin-like 3 domain. Histidine 480, histidine 483, and histidine 485 together coordinate Cu cation. An N-linked (GlcNAc...) asparagine glycan is attached at asparagine 500. Cu cation is bound by residues histidine 542, cysteine 543, histidine 544, and histidine 548.

Belongs to the multicopper oxidase family. Cu cation serves as cofactor.

The protein localises to the secreted. Its subcellular location is the extracellular space. It localises to the apoplast. It catalyses the reaction 4 hydroquinone + O2 = 4 benzosemiquinone + 2 H2O. In terms of biological role, lignin degradation and detoxification of lignin-derived products. This chain is Laccase-24 (LAC24), found in Oryza sativa subsp. japonica (Rice).